The chain runs to 114 residues: Amphinase-1 (114 aa).

Catalysis depends on histidine 15, which acts as the Proton acceptor. 4 disulfides stabilise this stretch: cysteine 26–cysteine 79, cysteine 41–cysteine 85, cysteine 59–cysteine 100, and cysteine 97–cysteine 114. An N-linked (GlcNAc...) asparagine glycan is attached at asparagine 27. 42 to 46 (KPVNT) lines the substrate pocket. N-linked (GlcNAc...) asparagine glycans are attached at residues asparagine 67 and asparagine 91. The active-site Proton donor is histidine 107.

The protein belongs to the pancreatic ribonuclease family. As to quaternary structure, monomer. Post-translationally, there are at least five different forms arising from glycan heterogeneity.

Its subcellular location is the secreted. In terms of biological role, endonuclease, hydrolyzes highly polymerized RNA, poly(U) and poly(C), and the dinucleotides CpA and UpA. More active towards rCA than rUA or rUG. Has cytotoxic activity against cultured human submaxillary gland carcinoma cells. The polypeptide is Amphinase-1 (Lithobates pipiens (Northern leopard frog)).